Reading from the N-terminus, the 937-residue chain is Outer membrane usher protein CS3-2 (937 aa).

This sequence belongs to the fimbrial export usher family. Post-translationally, a 97 kDa form of the protein is thought to be due to post-translational processing of isoform 104 kDa.

Its subcellular location is the cell outer membrane. In terms of biological role, these proteins are essential for the biogenesis of mature CS3 pili, but not for synthesis of the CS3 pilin subunit. This is Outer membrane usher protein CS3-2 from Escherichia coli.